The primary structure comprises 138 residues: MKPAARRRARECAVQALYSWQLSKNDIADVEHQFLSEQDVKDVDIVYFRELLSGVAVNAGLLDSLMAPVLSRQLEELGQVERAVLRIALYELKMREDVPYKVAINEAIELAKTFGAEDSHKFVNGVLDKVAPSIRKKK.

It belongs to the NusB family.

Functionally, involved in transcription antitermination. Required for transcription of ribosomal RNA (rRNA) genes. Binds specifically to the boxA antiterminator sequence of the ribosomal RNA (rrn) operons. The protein is Transcription antitermination protein NusB of Serratia proteamaculans (strain 568).